The following is a 149-amino-acid chain: D-aminoacyl-tRNA deacylase (149 aa).

The short motif at 137–138 is the Gly-cisPro motif, important for rejection of L-amino acids element; that stretch reads GP.

This sequence belongs to the DTD family. Homodimer.

It localises to the cytoplasm. It catalyses the reaction glycyl-tRNA(Ala) + H2O = tRNA(Ala) + glycine + H(+). The enzyme catalyses a D-aminoacyl-tRNA + H2O = a tRNA + a D-alpha-amino acid + H(+). In terms of biological role, an aminoacyl-tRNA editing enzyme that deacylates mischarged D-aminoacyl-tRNAs. Also deacylates mischarged glycyl-tRNA(Ala), protecting cells against glycine mischarging by AlaRS. Acts via tRNA-based rather than protein-based catalysis; rejects L-amino acids rather than detecting D-amino acids in the active site. By recycling D-aminoacyl-tRNA to D-amino acids and free tRNA molecules, this enzyme counteracts the toxicity associated with the formation of D-aminoacyl-tRNA entities in vivo and helps enforce protein L-homochirality. The protein is D-aminoacyl-tRNA deacylase of Clostridium botulinum (strain ATCC 19397 / Type A).